Here is a 176-residue protein sequence, read N- to C-terminus: Nuclear ribonuclease Z (176 aa).

The protein belongs to the RNase Z family. In terms of assembly, homodimer. Zn(2+) is required as a cofactor.

The protein localises to the nucleus. It catalyses the reaction Endonucleolytic cleavage of RNA, removing extra 3' nucleotides from tRNA precursor, generating 3' termini of tRNAs. A 3'-hydroxy group is left at the tRNA terminus and a 5'-phosphoryl group is left at the trailer molecule.. Its function is as follows. Zinc phosphodiesterase, which displays some tRNA 3'-processing endonuclease activity. Probably involved in tRNA maturation, by removing a 3'-trailer from precursor tRNA. The protein is Nuclear ribonuclease Z (ELAC) of Triticum aestivum (Wheat).